The primary structure comprises 20 residues: Antifungal protein 2 large subunit (20 aa).

The segment at 1-20 is disordered; the sequence is PEDPQRRYQEXQREXRXQQE.

Heterodimer of a large and a small subunit.

Functionally, possesses antifungal activity against P.infestans but not F.graminearum. The sequence is that of Antifungal protein 2 large subunit from Malva parviflora (Little mallow).